We begin with the raw amino-acid sequence, 1241 residues long: ATP-dependent helicase/nuclease subunit A (1241 aa).

The UvrD-like helicase ATP-binding domain occupies 12-485 (SQWTDDQWKA…IDLAKNFRSR (474 aa)). Position 33 to 40 (33 to 40 (AAAGSGKT)) interacts with ATP. A UvrD-like helicase C-terminal domain is found at 505 to 805 (GEIDYDADAE…RIMTIHKSKG (301 aa)).

This sequence belongs to the helicase family. AddA subfamily. As to quaternary structure, heterodimer of AddA and AddB/RexB. Mg(2+) is required as a cofactor.

The enzyme catalyses Couples ATP hydrolysis with the unwinding of duplex DNA by translocating in the 3'-5' direction.. It catalyses the reaction ATP + H2O = ADP + phosphate + H(+). Functionally, the heterodimer acts as both an ATP-dependent DNA helicase and an ATP-dependent, dual-direction single-stranded exonuclease. Recognizes the chi site generating a DNA molecule suitable for the initiation of homologous recombination. The AddA nuclease domain is required for chi fragment generation; this subunit has the helicase and 3' -&gt; 5' nuclease activities. The sequence is that of ATP-dependent helicase/nuclease subunit A from Bacillus cereus (strain ATCC 10987 / NRS 248).